The primary structure comprises 93 residues: Small ribosomal subunit protein uS19 (93 aa).

This sequence belongs to the universal ribosomal protein uS19 family.

Its function is as follows. Protein S19 forms a complex with S13 that binds strongly to the 16S ribosomal RNA. This is Small ribosomal subunit protein uS19 from Campylobacter fetus subsp. fetus (strain 82-40).